Reading from the N-terminus, the 362-residue chain is Phosphatidylserine decarboxylase proenzyme (362 aa).

Residues 26-44 (YLLTGVTILSFIFMFQYKY) traverse the membrane as a helical segment. Catalysis depends on charge relay system; for autoendoproteolytic cleavage activity residues Asp-147, His-206, and Ser-316. Residue Ser-316 is the Schiff-base intermediate with substrate; via pyruvic acid; for decarboxylase activity of the active site. Ser-316 is modified (pyruvic acid (Ser); by autocatalysis).

This sequence belongs to the phosphatidylserine decarboxylase family. PSD-B subfamily. Eukaryotic type I sub-subfamily. Heterodimer of a large membrane-associated beta subunit and a small pyruvoyl-containing alpha subunit. Requires pyruvate as cofactor. In terms of processing, is synthesized initially as an inactive proenzyme. Formation of the active enzyme involves a self-maturation process in which the active site pyruvoyl group is generated from an internal serine residue via an autocatalytic post-translational modification. Two non-identical subunits are generated from the proenzyme in this reaction, and the pyruvate is formed at the N-terminus of the alpha chain, which is derived from the carboxyl end of the proenzyme. The autoendoproteolytic cleavage occurs by a canonical serine protease mechanism, in which the side chain hydroxyl group of the serine supplies its oxygen atom to form the C-terminus of the beta chain, while the remainder of the serine residue undergoes an oxidative deamination to produce ammonia and the pyruvoyl prosthetic group on the alpha chain. During this reaction, the Ser that is part of the protease active site of the proenzyme becomes the pyruvoyl prosthetic group, which constitutes an essential element of the active site of the mature decarboxylase.

The protein resides in the endoplasmic reticulum membrane. It catalyses the reaction a 1,2-diacyl-sn-glycero-3-phospho-L-serine + H(+) = a 1,2-diacyl-sn-glycero-3-phosphoethanolamine + CO2. It functions in the pathway phospholipid metabolism; phosphatidylethanolamine biosynthesis; phosphatidylethanolamine from CDP-diacylglycerol: step 2/2. Its function is as follows. Catalyzes the formation of phosphatidylethanolamine (PtdEtn) from phosphatidylserine (PtdSer). Plays a central role in phospholipid metabolism and in the interorganelle trafficking of phosphatidylserine. This Plasmodium falciparum protein is Phosphatidylserine decarboxylase proenzyme.